The sequence spans 245 residues: GTP cyclohydrolase 1 type 2 homolog (245 aa).

A divalent metal cation-binding residues include H63, H64, D100, H213, and E217.

This sequence belongs to the GTP cyclohydrolase I type 2/NIF3 family. As to quaternary structure, homohexamer.

This chain is GTP cyclohydrolase 1 type 2 homolog, found in Archaeoglobus fulgidus (strain ATCC 49558 / DSM 4304 / JCM 9628 / NBRC 100126 / VC-16).